The following is a 412-amino-acid chain: Serine hydroxymethyltransferase (412 aa).

(6S)-5,6,7,8-tetrahydrofolate-binding positions include L117 and 121 to 123 (GHL). K226 bears the N6-(pyridoxal phosphate)lysine mark. 349–351 (SPF) lines the (6S)-5,6,7,8-tetrahydrofolate pocket.

The protein belongs to the SHMT family. As to quaternary structure, homodimer. The cofactor is pyridoxal 5'-phosphate.

It is found in the cytoplasm. The catalysed reaction is (6R)-5,10-methylene-5,6,7,8-tetrahydrofolate + glycine + H2O = (6S)-5,6,7,8-tetrahydrofolate + L-serine. The protein operates within one-carbon metabolism; tetrahydrofolate interconversion. It participates in amino-acid biosynthesis; glycine biosynthesis; glycine from L-serine: step 1/1. Catalyzes the reversible interconversion of serine and glycine with tetrahydrofolate (THF) serving as the one-carbon carrier. This reaction serves as the major source of one-carbon groups required for the biosynthesis of purines, thymidylate, methionine, and other important biomolecules. Also exhibits THF-independent aldolase activity toward beta-hydroxyamino acids, producing glycine and aldehydes, via a retro-aldol mechanism. This is Serine hydroxymethyltransferase from Lawsonia intracellularis (strain PHE/MN1-00).